We begin with the raw amino-acid sequence, 462 residues long: Toxin CfTX-2 (462 aa).

A signal peptide spans 1 to 17 (MILVSLLPLLFMTGIAS).

Belongs to the jellyfish toxin family. Type I subfamily. In terms of assembly, oligomer. Contains disulfide bonds. As to expression, nematocytes.

It is found in the secreted. It localises to the nematocyst. The protein localises to the target cell membrane. May cause profound effects on the cardiovascular system of anesthetized rats (at 25 ug/kg), since the fraction containing this toxin and CfTX-1 produces an initial increase in mean arterial pressure, followed by cardiovascular collapse in all animals within 1 minute of injection. To note, the same fraction does not induce significant change in heart rate. Has weak hemolytic activity. Is lethal to crayfish. Causes cutaneous inflammation in humans. May act as a pore-forming toxin, disrupting normal transmembrane ion concentration gradients in susceptible cells. The chain is Toxin CfTX-2 from Chironex fleckeri (Australian box jellyfish).